Here is a 672-residue protein sequence, read N- to C-terminus: Glycogen [starch] synthase (672 aa).

Lysine 56 contributes to the UDP-alpha-D-glucose binding site. Residues 645 to 672 are disordered; sequence MRDNEGKVPSAATSRRPSIHSSDGEDDE. Over residues 655-665 the composition is skewed to polar residues; the sequence is AATSRRPSIHS.

This sequence belongs to the glycosyltransferase 3 family. In terms of assembly, forms a hetero-octamer with each protomer of the gsy-1 homotetramer bound to one molecule of gyg-1. The N-terminus is involved in interprotomer contacts with gyg-1. The interaction with gyg-1 is required for glycogen production but is not required for gsy-1 intrinsic activity.

It carries out the reaction [(1-&gt;4)-alpha-D-glucosyl](n) + UDP-alpha-D-glucose = [(1-&gt;4)-alpha-D-glucosyl](n+1) + UDP + H(+). Its pathway is glycan biosynthesis; glycogen biosynthesis. Functionally, transfers the glycosyl residue from UDP-Glc to the non-reducing end of alpha-1,4-glucan. The polypeptide is Glycogen [starch] synthase (Caenorhabditis elegans).